We begin with the raw amino-acid sequence, 376 residues long: Succinyl-diaminopimelate desuccinylase (376 aa).

Histidine 64 provides a ligand contact to Zn(2+). Residue aspartate 66 is part of the active site. Residue aspartate 97 coordinates Zn(2+). Glutamate 131 functions as the Proton acceptor in the catalytic mechanism. Residues glutamate 132, glutamate 160, and histidine 347 each coordinate Zn(2+).

The protein belongs to the peptidase M20A family. DapE subfamily. In terms of assembly, homodimer. Requires Zn(2+) as cofactor. Co(2+) serves as cofactor.

It carries out the reaction N-succinyl-(2S,6S)-2,6-diaminopimelate + H2O = (2S,6S)-2,6-diaminopimelate + succinate. The protein operates within amino-acid biosynthesis; L-lysine biosynthesis via DAP pathway; LL-2,6-diaminopimelate from (S)-tetrahydrodipicolinate (succinylase route): step 3/3. Catalyzes the hydrolysis of N-succinyl-L,L-diaminopimelic acid (SDAP), forming succinate and LL-2,6-diaminopimelate (DAP), an intermediate involved in the bacterial biosynthesis of lysine and meso-diaminopimelic acid, an essential component of bacterial cell walls. This chain is Succinyl-diaminopimelate desuccinylase, found in Wigglesworthia glossinidia brevipalpis.